Reading from the N-terminus, the 258-residue chain is DNA repair protein RecO (258 aa).

This sequence belongs to the RecO family.

Involved in DNA repair and RecF pathway recombination. The polypeptide is DNA repair protein RecO (Syntrophotalea carbinolica (strain DSM 2380 / NBRC 103641 / GraBd1) (Pelobacter carbinolicus)).